A 220-amino-acid polypeptide reads, in one-letter code: UPF0319 protein YccT (220 aa).

The N-terminal stretch at 1 to 20 (MKTGALATFLALCLPVTVFA) is a signal peptide.

The protein belongs to the UPF0319 family.

The polypeptide is UPF0319 protein YccT (Salmonella enteritidis PT4 (strain P125109)).